We begin with the raw amino-acid sequence, 120 residues long: Purkinje cell protein 2 (120 aa).

GoLoco domains are found at residues 7 to 29 (QEGFFNLLTHVQGDRMEEQRCSL) and 47 to 69 (MDNLMDMLVNTQGRRMDDQRVTV). A disordered region spans residues 16–120 (HVQGDRMEEQ…SSPQPQTQAP (105 aa)). A compositionally biased stretch (polar residues) spans 108-120 (RRNSSPQPQTQAP). S111 carries the phosphoserine modification.

In terms of tissue distribution, cerebellum (Purkinje cells) and retinal bipolar neurons.

Functionally, may function as a cell-type specific modulator for G protein-mediated cell signaling. This Mus musculus (Mouse) protein is Purkinje cell protein 2 (Pcp2).